Consider the following 397-residue polypeptide: MESRGTKREAGKIEVAEPRNKLPRPAPSLPTDPALYSGPFPFYRRPSELGCFSLDAQRQYHGDARALRYYSPPPTNGQSPNFDLRDGYPDRYQPRDEEVQERLDHLLRWLLEHRGQLEGGPGWLAGAIVTWRGHLTKLLTTPYERQEGWQLAASRFRGTLYLSEVETPAARVQRLTRPPLLRELMYMGYKFEQYMCADKPGVSPDPSGEVNTNVAFCSVLRSRLGNHPLLFSGEVDCTDPQAPSTQPPTCYVELKTSKEMHSPGQWKSFYRHKLLKWWAQSFLPGVPNVVAGFRNPEGFVCSLKTFPTMEMFEYVRNDRDGWNPSVCMNFCAAFLSFAQNTAVQDDPRLVYLFSWEPGGPVTVSEHRDAPHAFLPPWYVEAVTQDLPSPPKTPSPKD.

Basic and acidic residues predominate over residues 1 to 20 (MESRGTKREAGKIEVAEPRN). Positions 1-37 (MESRGTKREAGKIEVAEPRNKLPRPAPSLPTDPALYS) are disordered. Arg-58 lines the substrate pocket. The interval 67–88 (LRYYSPPPTNGQSPNFDLRDGY) is disordered. Residues Glu-101 and 131-133 (WRG) each bind substrate. Mg(2+) is bound at residue Glu-192. Residues Cys-217 and Glu-234 each contribute to the substrate site. The Mg(2+) site is built by Glu-234, Asp-236, Glu-253, and Leu-254. Substrate-binding residues include Lys-255 and Gln-280. Thr-392 is modified (phosphothreonine). The residue at position 394 (Ser-394) is a Phosphoserine.

This sequence belongs to the DXO/Dom3Z family. It depends on Mg(2+) as a cofactor.

Its subcellular location is the nucleus. It catalyses the reaction a 5'-end triphospho-ribonucleoside in mRNA + H2O = a 5'-end phospho-ribonucleoside in mRNA + diphosphate + H(+). It carries out the reaction a 5'-end NAD(+)-phospho-ribonucleoside in mRNA + H2O = a 5'-end phospho-ribonucleoside in mRNA + NAD(+) + H(+). The catalysed reaction is a 5'-end NAD(+)-phospho-ribonucleoside in snoRNA + H2O = a 5'-end phospho-ribonucleoside in snoRNA + NAD(+) + H(+). The enzyme catalyses a 5'-end (N(7)-methyl 5'-triphosphoguanosine)-ribonucleoside-ribonucleotide in mRNA + H2O = a (N(7)-methyl 5'-triphosphoguanosine)-nucleoside + a 5'-end phospho-ribonucleoside in mRNA + H(+). It catalyses the reaction a 5'-end FAD-phospho-ribonucleoside in mRNA + H2O = a 5'-end phospho-ribonucleoside in mRNA + FAD + H(+). It carries out the reaction a 5'-end CoA-ribonucleoside in mRNA + H2O = 3'-dephospho-CoA + a 5'-end phospho-ribonucleoside in mRNA + H(+). Decapping enzyme for NAD-capped RNAs: specifically hydrolyzes the nicotinamide adenine dinucleotide (NAD) cap from a subset of RNAs by removing the entire NAD moiety from the 5'-end of an NAD-capped RNA. The NAD-cap is present at the 5'-end of some RNAs and snoRNAs. In contrast to the canonical 5'-end N7 methylguanosine (m7G) cap, the NAD cap promotes mRNA decay. Preferentially acts on NAD-capped transcripts in response to environmental stress. Also acts as a non-canonical decapping enzyme that removes the entire cap structure of m7G capped or incompletely capped RNAs and mediates their subsequent degradation. Specifically degrades pre-mRNAs with a defective 5'-end m7G cap and is part of a pre-mRNA capping quality control. Has decapping activity toward incomplete 5'-end m7G cap mRNAs such as unmethylated 5'-end-capped RNA (cap0), while it has no activity toward 2'-O-ribose methylated m7G cap (cap1). In contrast to canonical decapping enzymes DCP2 and NUDT16, which cleave the cap within the triphosphate linkage, the decapping activity releases the entire cap structure GpppN and a 5'-end monophosphate RNA. Also has 5'-3' exoribonuclease activities: The 5'-end monophosphate RNA is then degraded by the 5'-3' exoribonuclease activity, enabling this enzyme to decap and degrade incompletely capped mRNAs. Also possesses RNA 5'-pyrophosphohydrolase activity by hydrolyzing the 5'-end triphosphate to release pyrophosphates. Exhibits decapping activity towards FAD-capped RNAs. Exhibits decapping activity towards dpCoA-capped RNAs in vitro. This chain is Decapping and exoribonuclease protein, found in Bos taurus (Bovine).